Consider the following 508-residue polypeptide: Flagellin (508 aa).

The protein belongs to the bacterial flagellin family.

It is found in the secreted. The protein localises to the bacterial flagellum. Its function is as follows. Flagellin is the subunit protein which polymerizes to form the filaments of bacterial flagella. This Salmonella berta protein is Flagellin (fliC).